Here is a 340-residue protein sequence, read N- to C-terminus: 4-hydroxy-2-oxovalerate aldolase (340 aa).

Residues 5 to 255 (IVITEVALRD…QTGVDLYKMM (251 aa)) enclose the Pyruvate carboxyltransferase domain. 13–14 (RD) lines the substrate pocket. Mn(2+) is bound at residue Asp-14. His-17 serves as the catalytic Proton acceptor. Substrate contacts are provided by Ser-167 and His-194. Mn(2+) is bound by residues His-194 and His-196. A substrate-binding site is contributed by Tyr-285.

It belongs to the 4-hydroxy-2-oxovalerate aldolase family.

The catalysed reaction is (S)-4-hydroxy-2-oxopentanoate = acetaldehyde + pyruvate. The polypeptide is 4-hydroxy-2-oxovalerate aldolase (Brevibacillus brevis (strain 47 / JCM 6285 / NBRC 100599)).